Here is a 278-residue protein sequence, read N- to C-terminus: Biotin synthase (278 aa).

In terms of domain architecture, Radical SAM core spans 1–227 (MQIMLCAISN…QSVVMVAGGR (227 aa)). Positions 16, 20, and 23 each coordinate [4Fe-4S] cluster. The [2Fe-2S] cluster site is built by Cys60, Asn96, and Cys154.

It belongs to the radical SAM superfamily. Biotin synthase family. As to quaternary structure, homodimer. [4Fe-4S] cluster serves as cofactor. Requires [2Fe-2S] cluster as cofactor.

The catalysed reaction is (4R,5S)-dethiobiotin + (sulfur carrier)-SH + 2 reduced [2Fe-2S]-[ferredoxin] + 2 S-adenosyl-L-methionine = (sulfur carrier)-H + biotin + 2 5'-deoxyadenosine + 2 L-methionine + 2 oxidized [2Fe-2S]-[ferredoxin]. The protein operates within cofactor biosynthesis; biotin biosynthesis; biotin from 7,8-diaminononanoate: step 2/2. Its function is as follows. Catalyzes the conversion of dethiobiotin (DTB) to biotin by the insertion of a sulfur atom into dethiobiotin via a radical-based mechanism. The polypeptide is Biotin synthase (Campylobacter jejuni subsp. jejuni serotype O:2 (strain ATCC 700819 / NCTC 11168)).